We begin with the raw amino-acid sequence, 202 residues long: Probable molybdenum cofactor guanylyltransferase (202 aa).

GTP is bound by residues 9–11 (VAG), K22, N50, D77, and D102. D102 contacts Mg(2+).

The protein belongs to the MobA family. Mg(2+) serves as cofactor.

It is found in the cytoplasm. The catalysed reaction is Mo-molybdopterin + GTP + H(+) = Mo-molybdopterin guanine dinucleotide + diphosphate. Functionally, transfers a GMP moiety from GTP to Mo-molybdopterin (Mo-MPT) cofactor (Moco or molybdenum cofactor) to form Mo-molybdopterin guanine dinucleotide (Mo-MGD) cofactor. This Natronomonas pharaonis (strain ATCC 35678 / DSM 2160 / CIP 103997 / JCM 8858 / NBRC 14720 / NCIMB 2260 / Gabara) (Halobacterium pharaonis) protein is Probable molybdenum cofactor guanylyltransferase.